The sequence spans 498 residues: ATP synthase subunit beta, chloroplastic (498 aa).

172–179 lines the ATP pocket; that stretch reads GGAGVGKT.

This sequence belongs to the ATPase alpha/beta chains family. In terms of assembly, F-type ATPases have 2 components, CF(1) - the catalytic core - and CF(0) - the membrane proton channel. CF(1) has five subunits: alpha(3), beta(3), gamma(1), delta(1), epsilon(1). CF(0) has four main subunits: a(1), b(1), b'(1) and c(9-12).

The protein resides in the plastid. It is found in the chloroplast thylakoid membrane. The enzyme catalyses ATP + H2O + 4 H(+)(in) = ADP + phosphate + 5 H(+)(out). Its function is as follows. Produces ATP from ADP in the presence of a proton gradient across the membrane. The catalytic sites are hosted primarily by the beta subunits. The sequence is that of ATP synthase subunit beta, chloroplastic from Populus trichocarpa (Western balsam poplar).